The primary structure comprises 187 residues: Ribosome-recycling factor (187 aa).

This sequence belongs to the RRF family.

It is found in the cytoplasm. Functionally, responsible for the release of ribosomes from messenger RNA at the termination of protein biosynthesis. May increase the efficiency of translation by recycling ribosomes from one round of translation to another. The sequence is that of Ribosome-recycling factor from Flavobacterium johnsoniae (strain ATCC 17061 / DSM 2064 / JCM 8514 / BCRC 14874 / CCUG 350202 / NBRC 14942 / NCIMB 11054 / UW101) (Cytophaga johnsonae).